A 515-amino-acid chain; its full sequence is MALLSAPVRRRRSRVRVLLVCCCLLLALAAPSAAAAAAGHDYGDALAKSILFFEGQRSGRLPAAGQRAAWRGDSAVSDGGAAGVDLEGGYYDAGDNVKFGFPMAFTATMLAWGVVEFGDAMPPAERAHAADAVRWATDYLLKTISHPGVIFIQVGDPTKDHGCWERPEDMDTARTVYNISAARPGSDVAGETAAALAAASMVFRDDDPAYAARLLAGARSAFEFADEHKGAYSDDPELRAGGCPFYCDFDGYQDELLWGAAWLRRASKEGTYLDYIQNNGKTLGAEDSTNEFGWDNKHAGINVLVSKEFIDGEVLSLQSYKEFADGFICTLIPESSSPHITYTPGGMIYKPGGSNMQHVTSISFLLLTYAKYLSNSSRTVNCGNVSVGPATLQQLARKQADYILGDNPMKMSYMVGYGDRYPQRIHHRGSSLPSIKSHPQRIACNDGTPYYNSSSPNPNPLIGAVVGGPGEDDVYEDDRADFRKSEPTTYINAPLVGVLAYLVGNPDPGQGHVRH.

Positions Met-1–Ala-29 are cleaved as a signal peptide. Asp-95 functions as the Nucleophile in the catalytic mechanism. Residues Asn-178, Asn-375, and Asn-384 are each glycosylated (N-linked (GlcNAc...) asparagine). Residue His-426 is part of the active site. Asn-452 is a glycosylation site (N-linked (GlcNAc...) asparagine). Catalysis depends on residues Asp-477 and Glu-486.

It belongs to the glycosyl hydrolase 9 (cellulase E) family.

It localises to the secreted. The catalysed reaction is Endohydrolysis of (1-&gt;4)-beta-D-glucosidic linkages in cellulose, lichenin and cereal beta-D-glucans.. In Oryza sativa subsp. japonica (Rice), this protein is Endoglucanase 23 (GLU12).